We begin with the raw amino-acid sequence, 319 residues long: Cytochrome c biogenesis protein CcsA (319 aa).

8 helical membrane-spanning segments follow: residues 14 to 34 (AFGG…FPGI), 36 to 56 (GLNR…TLTL), 69 to 89 (SNLY…HLFI), 97 to 117 (LIGA…SLAL), 142 to 162 (IMML…LFLI), 227 to 247 (TIGL…VWAN), 254 to 274 (WSWD…AAYL), and 288 to 308 (AILA…VNFL).

The protein belongs to the CcmF/CycK/Ccl1/NrfE/CcsA family. As to quaternary structure, may interact with Ccs1.

The protein resides in the plastid. It localises to the chloroplast thylakoid membrane. Required during biogenesis of c-type cytochromes (cytochrome c6 and cytochrome f) at the step of heme attachment. This chain is Cytochrome c biogenesis protein CcsA, found in Pyropia yezoensis (Susabi-nori).